Reading from the N-terminus, the 126-residue chain is MCTYIITQSFFFLPCLSFLFFKLVGFFDSVFTAGKSLRIMFELPIFDKLTSCFAAIDCSATSLDIPFAEEELFLMLVSEPVLIPFLFVFEFMLICKPCGSRSRFGFPVKNVSDFEETLEFDPTLLV.

Residues 1–9 (MCTYIITQS) are Extracellular-facing. Residues 10-30 (FFFLPCLSFLFFKLVGFFDSV) traverse the membrane as a helical segment. Residues 31 to 73 (FTAGKSLRIMFELPIFDKLTSCFAAIDCSATSLDIPFAEEELF) lie on the Cytoplasmic side of the membrane. A helical membrane pass occupies residues 74 to 94 (LMLVSEPVLIPFLFVFEFMLI). Residues 95–126 (CKPCGSRSRFGFPVKNVSDFEETLEFDPTLLV) are Extracellular-facing.

The protein resides in the membrane. This is an uncharacterized protein from Saccharomyces cerevisiae (strain ATCC 204508 / S288c) (Baker's yeast).